Consider the following 278-residue polypeptide: Indole-3-glycerol phosphate synthase (278 aa).

This sequence belongs to the TrpC family.

It catalyses the reaction 1-(2-carboxyphenylamino)-1-deoxy-D-ribulose 5-phosphate + H(+) = (1S,2R)-1-C-(indol-3-yl)glycerol 3-phosphate + CO2 + H2O. It functions in the pathway amino-acid biosynthesis; L-tryptophan biosynthesis; L-tryptophan from chorismate: step 4/5. The polypeptide is Indole-3-glycerol phosphate synthase (Pseudomonas aeruginosa (strain LESB58)).